Here is a 367-residue protein sequence, read N- to C-terminus: Pre-small/secreted glycoprotein (367 aa).

A signal peptide spans 1 to 33 (MGSGYQLLQLPRERFRKTSFLVWVIILFQRAIS). An N-linked (GlcNAc...) asparagine; by host glycan is attached at Asn-41. Intrachain disulfides connect Cys-109-Cys-136 and Cys-122-Cys-148. 4 N-linked (GlcNAc...) asparagine; by host glycosylation sites follow: Asn-205, Asn-239, Asn-258, and Asn-269.

The protein belongs to the filoviruses glycoprotein family. In terms of assembly, homodimer; disulfide-linked. The homodimers are linked by two disulfide bonds in a parallel orientation. As to quaternary structure, monomer. In terms of processing, this precursor is processed into mature sGP and delta-peptide by host furin or furin-like proteases. The cleavage site corresponds to the furin optimal cleavage sequence [KR]-X-[KR]-R. Post-translationally, N-glycosylated. O-glycosylated.

The protein localises to the secreted. Functionally, seems to possess an anti-inflammatory activity as it can reverse the barrier-decreasing effects of TNF alpha. Might therefore contribute to the lack of inflammatory reaction seen during infection in spite the of extensive necrosis and massive virus production. Does not seem to be involved in activation of primary macrophages. Does not seem to interact specifically with neutrophils. In terms of biological role, viroporin that permeabilizes mammalian cell plasma membranes. It acts by altering permeation of ionic compounds and small molecules. This activity may lead to viral enterotoxic activity. This Reston ebolavirus (strain Siena/Philippine-92) (REBOV) protein is Pre-small/secreted glycoprotein (GP).